Consider the following 1374-residue polypeptide: Y' element ATP-dependent helicase YLL066C (1374 aa).

Positions 321 to 345 (AGEAASSDHDQKISRVTRKRPREPK) are disordered. The Helicase ATP-binding domain occupies 375 to 552 (EIYMADTPSV…LQRIGLTGLA (178 aa)). 388–395 (APPGYGKT) serves as a coordination point for ATP. A DEAH box motif is present at residues 498–501 (DEFH). The 150-residue stretch at 609 to 758 (KLLLALFEIE…EFYGLESKKG (150 aa)) folds into the Helicase C-terminal domain. Residues 832–975 (ANASTNATTN…ATTTESTNAS (144 aa)) are compositionally biased toward low complexity. The segment at 832–999 (ANASTNATTN…RFHPVTDINK (168 aa)) is disordered. A compositionally biased stretch (basic and acidic residues) spans 976–999 (AKEDANKDGNAEDNRFHPVTDINK).

It belongs to the helicase family. Yeast subtelomeric Y' repeat subfamily.

Functionally, catalyzes DNA unwinding and is involved in telomerase-independent telomere maintenance. The sequence is that of Y' element ATP-dependent helicase YLL066C from Saccharomyces cerevisiae (strain ATCC 204508 / S288c) (Baker's yeast).